The primary structure comprises 184 residues: Fe/S biogenesis protein NfuA (184 aa).

2 residues coordinate [4Fe-4S] cluster: Cys142 and Cys145.

Belongs to the NfuA family. Homodimer. It depends on [4Fe-4S] cluster as a cofactor.

Involved in iron-sulfur cluster biogenesis. Binds a 4Fe-4S cluster, can transfer this cluster to apoproteins, and thereby intervenes in the maturation of Fe/S proteins. Could also act as a scaffold/chaperone for damaged Fe/S proteins. The chain is Fe/S biogenesis protein NfuA from Wigglesworthia glossinidia brevipalpis.